Reading from the N-terminus, the 393-residue chain is Short-chain dehydrogenase/reductase family 42E member 1 (393 aa).

Tyr152 acts as the Proton acceptor in catalysis. Residue Lys156 coordinates NAD(+). 2 helical membrane-spanning segments follow: residues 282–302 (LPLTLIYCFAFLTEMTHFILG) and 371–391 (GLVILLVVTVVLVWLLPSVIL).

This sequence belongs to the 3-beta-HSD family.

Its subcellular location is the membrane. This chain is Short-chain dehydrogenase/reductase family 42E member 1 (SDR42E1), found in Bos taurus (Bovine).